The following is a 1562-amino-acid chain: Pikromycin polyketide synthase component PikAIII (1562 aa).

Residues 34-464 (HEPVAIVGMA…GTNAHVVLEE (431 aa)) enclose the Ketosynthase family 3 (KS3) domain. Residues 37-1475 (VAIVGMACRL…TPAALAAHLH (1439 aa)) form a module 5 region. Cysteine 209 acts as the Acyl-thioester intermediate; for beta-ketoacyl synthase activity in catalysis. Catalysis depends on for beta-ketoacyl synthase activity residues histidine 344 and histidine 384. Residues 565-866 (FVFPGQGTQW…GGQERLVTSL (302 aa)) form an acyltransferase region. Serine 655 serves as the catalytic Acyl-ester intermediate; for acyltransferase activity. The segment at 1116–1293 (GTVLITGGTG…ATSVAWGLWA (178 aa)) is beta-ketoacyl reductase. Residues 1124-1127 (TGAL), 1147-1150 (SRSG), 1176-1177 (DV), lysine 1226, and 1248-1249 (YS) contribute to the NADP(+) site. Tyrosine 1263 serves as the catalytic Acyl-ester intermediate; for beta-ketoacyl reductase activity. The region spanning 1403-1478 (PALLTLVRTH…ALAAHLHEAY (76 aa)) is the Carrier domain. Serine 1438 bears the O-(pantetheine 4'-phosphoryl)serine mark. Positions 1519 to 1548 (GIEPEPGSGGSDGGAADPGAEPEASIDDLD) are disordered. Positions 1532–1541 (GAADPGAEPE) are enriched in low complexity.

Homodimer. Pikromycin PKS consists of a combination of multimodular (PikAI and PikAII) and monomodular (PikAIII and PikAIV) polypeptides each coding for a functional synthase subunit which participates in 1 (monomodular) or 2 (multimodular) of the six FAS-like elongation steps required for formation of the polyketide. Module 1, 2, 3, 4, 5, and 6 participating in biosynthesis steps 1, 2, 3, 4, 5, and 6, respectively. The cofactor is pantetheine 4'-phosphate.

The catalysed reaction is 5 (S)-methylmalonyl-CoA + malonyl-CoA + 5 NADPH + 11 H(+) = 10-deoxymethynolide + 6 CO2 + 5 NADP(+) + 6 CoA + 2 H2O. It catalyses the reaction 6 (S)-methylmalonyl-CoA + malonyl-CoA + 5 NADPH + 12 H(+) = narbonolide + 7 CO2 + 5 NADP(+) + 7 CoA + 2 H2O. It participates in antibiotic biosynthesis. Involved in the biosynthesis of 12- and 14-membered ring macrolactone antibiotics such as methymycin and neomethymycin, and pikromycin and narbomycin, respectively. Component of the pikromycin PKS which catalyzes the biosynthesis of both precursors 10-deoxymethynolide (12-membered ring macrolactone) and narbonolide (14-membered ring macrolactone). Chain elongation through PikAI, PikAII and PikAIII followed by thioesterase catalyzed termination results in the production of 10-deoxymethynolide, while continued elongation through PikAIV, followed by thioesterase (TE) catalyzed cyclization results in the biosynthesis of the narbonolide. This chain is Pikromycin polyketide synthase component PikAIII, found in Streptomyces venezuelae.